A 113-amino-acid chain; its full sequence is Ribonuclease P protein component (113 aa).

Belongs to the RnpA family. Consists of a catalytic RNA component (M1 or rnpB) and a protein subunit.

The enzyme catalyses Endonucleolytic cleavage of RNA, removing 5'-extranucleotides from tRNA precursor.. Functionally, RNaseP catalyzes the removal of the 5'-leader sequence from pre-tRNA to produce the mature 5'-terminus. It can also cleave other RNA substrates such as 4.5S RNA. The protein component plays an auxiliary but essential role in vivo by binding to the 5'-leader sequence and broadening the substrate specificity of the ribozyme. In Geotalea uraniireducens (strain Rf4) (Geobacter uraniireducens), this protein is Ribonuclease P protein component.